The following is a 324-amino-acid chain: Beta-ketoacyl-[acyl-carrier-protein] synthase III (324 aa).

Catalysis depends on residues C116 and H251. Positions 252 to 256 (QANLR) are ACP-binding. N281 is an active-site residue.

Belongs to the thiolase-like superfamily. FabH family. As to quaternary structure, homodimer.

Its subcellular location is the cytoplasm. The enzyme catalyses malonyl-[ACP] + acetyl-CoA + H(+) = 3-oxobutanoyl-[ACP] + CO2 + CoA. Its pathway is lipid metabolism; fatty acid biosynthesis. Catalyzes the condensation reaction of fatty acid synthesis by the addition to an acyl acceptor of two carbons from malonyl-ACP. Catalyzes the first condensation reaction which initiates fatty acid synthesis and may therefore play a role in governing the total rate of fatty acid production. Possesses both acetoacetyl-ACP synthase and acetyl transacylase activities. Its substrate specificity determines the biosynthesis of branched-chain and/or straight-chain of fatty acids. The sequence is that of Beta-ketoacyl-[acyl-carrier-protein] synthase III from Xylella fastidiosa (strain 9a5c).